Reading from the N-terminus, the 188-residue chain is Elongation factor P (188 aa).

It belongs to the elongation factor P family.

It localises to the cytoplasm. It participates in protein biosynthesis; polypeptide chain elongation. In terms of biological role, involved in peptide bond synthesis. Stimulates efficient translation and peptide-bond synthesis on native or reconstituted 70S ribosomes in vitro. Probably functions indirectly by altering the affinity of the ribosome for aminoacyl-tRNA, thus increasing their reactivity as acceptors for peptidyl transferase. The polypeptide is Elongation factor P (Phenylobacterium zucineum (strain HLK1)).